We begin with the raw amino-acid sequence, 283 residues long: tRNA-cytidine(32) 2-sulfurtransferase (283 aa).

The PP-loop motif signature appears at 32 to 37; sequence SGGKDS. The [4Fe-4S] cluster site is built by C107, C110, and C198.

It belongs to the TtcA family. As to quaternary structure, homodimer. Mg(2+) is required as a cofactor. It depends on [4Fe-4S] cluster as a cofactor.

The protein localises to the cytoplasm. The enzyme catalyses cytidine(32) in tRNA + S-sulfanyl-L-cysteinyl-[cysteine desulfurase] + AH2 + ATP = 2-thiocytidine(32) in tRNA + L-cysteinyl-[cysteine desulfurase] + A + AMP + diphosphate + H(+). Its pathway is tRNA modification. Functionally, catalyzes the ATP-dependent 2-thiolation of cytidine in position 32 of tRNA, to form 2-thiocytidine (s(2)C32). The sulfur atoms are provided by the cysteine/cysteine desulfurase (IscS) system. The sequence is that of tRNA-cytidine(32) 2-sulfurtransferase from Sorangium cellulosum (strain So ce56) (Polyangium cellulosum (strain So ce56)).